A 355-amino-acid polypeptide reads, in one-letter code: UDP-N-acetylglucosamine--N-acetylmuramyl-(pentapeptide) pyrophosphoryl-undecaprenol N-acetylglucosamine transferase (355 aa).

UDP-N-acetyl-alpha-D-glucosamine-binding residues include Arg-166, Ser-196, and Gln-290.

It belongs to the glycosyltransferase 28 family. MurG subfamily.

The protein resides in the cell membrane. It carries out the reaction Mur2Ac(oyl-L-Ala-gamma-D-Glu-L-Lys-D-Ala-D-Ala)-di-trans,octa-cis-undecaprenyl diphosphate + UDP-N-acetyl-alpha-D-glucosamine = beta-D-GlcNAc-(1-&gt;4)-Mur2Ac(oyl-L-Ala-gamma-D-Glu-L-Lys-D-Ala-D-Ala)-di-trans,octa-cis-undecaprenyl diphosphate + UDP + H(+). Its pathway is cell wall biogenesis; peptidoglycan biosynthesis. Its function is as follows. Cell wall formation. Catalyzes the transfer of a GlcNAc subunit on undecaprenyl-pyrophosphoryl-MurNAc-pentapeptide (lipid intermediate I) to form undecaprenyl-pyrophosphoryl-MurNAc-(pentapeptide)GlcNAc (lipid intermediate II). The protein is UDP-N-acetylglucosamine--N-acetylmuramyl-(pentapeptide) pyrophosphoryl-undecaprenol N-acetylglucosamine transferase of Staphylococcus haemolyticus (strain JCSC1435).